A 783-amino-acid polypeptide reads, in one-letter code: Cyclic di-GMP phosphodiesterase NbdA (783 aa).

Residues 81 to 274 enclose the MHYT domain; the sequence is YSPSLVALAF…FTGMAALVLS (194 aa). 7 helical membrane passes run 84–104, 120–140, 150–170, 176–196, 215–235, 255–275, and 292–312; these read SLVA…LDMV, IGAF…MLAF, LPIT…TMYM, FGLL…AAMH, LFAL…AAVP, LLAG…VLSV, and LGWL…WAAW. The Cytoplasmic segment spans residues 313–783; that stretch reads SEKQRERRLS…APPLRSLNQA (471 aa). The GGDEF domain occupies 375 to 507; sequence KGLAVMFLDL…GRNNAQFFSR (133 aa). The 255-residue stretch at 516-770 folds into the EAL domain; the sequence is ELQMEEELRQ…ALEEFLRAYR (255 aa). Q537, E551, R555, N610, and N615 together coordinate 3',3'-c-di-GMP. E551 lines the Mg(2+) pocket. N610 contacts Mg(2+). Residues E642, D672, and D673 each coordinate Mg(2+). Residue D672 coordinates 3',3'-c-di-GMP. R696 contacts 3',3'-c-di-GMP. E729 is a Mg(2+) binding site. E732 and Y751 together coordinate 3',3'-c-di-GMP.

The cofactor is Mg(2+).

The protein resides in the cell inner membrane. The catalysed reaction is 3',3'-c-di-GMP + H2O = 5'-phosphoguanylyl(3'-&gt;5')guanosine + H(+). With respect to regulation, PDE activity is stimulated by GTP. It could also be stimulated by NO. In terms of biological role, displays c-di-GMP-specific phosphodiesterase (PDE) activity. Seems to play a specific role in nitric oxide (NO)-induced biofilm dispersion. Enhanced NbdA synthesis in the presence of NO increases PDE activity, leading to reduced cellular c-di-GMP levels and biofilm dispersion. Does not show diguanylate cyclase (DGC) activity. This chain is Cyclic di-GMP phosphodiesterase NbdA, found in Pseudomonas aeruginosa (strain ATCC 15692 / DSM 22644 / CIP 104116 / JCM 14847 / LMG 12228 / 1C / PRS 101 / PAO1).